Reading from the N-terminus, the 262-residue chain is Glutamate 5-kinase (262 aa).

Residue lysine 14 participates in ATP binding. Positions 54, 141, and 153 each coordinate substrate. Residues 173–174 and 214–220 contribute to the ATP site; these read SD and TGGMVTK.

It belongs to the glutamate 5-kinase family.

The protein localises to the cytoplasm. It carries out the reaction L-glutamate + ATP = L-glutamyl 5-phosphate + ADP. It participates in amino-acid biosynthesis; L-proline biosynthesis; L-glutamate 5-semialdehyde from L-glutamate: step 1/2. Functionally, catalyzes the transfer of a phosphate group to glutamate to form L-glutamate 5-phosphate. This Symbiobacterium thermophilum (strain DSM 24528 / JCM 14929 / IAM 14863 / T) protein is Glutamate 5-kinase.